Reading from the N-terminus, the 1135-residue chain is DNA-directed RNA polymerase I subunit RPA2 (1135 aa).

Residues 1–26 (MDVDGRWRNLPSGPSLKHLTDPSYGI) form a disordered region. Arginine 180 lines the RNA pocket. The segment at 194–208 (VRPKWKSRGLGYTQF) is loop B. Positions 236–247 (LNFIYRKELFFL) are loop A. Aspartate 367 provides a ligand contact to RNA. Fork loop stretches follow at residues 439 to 453 (LRSK…DSGL) and 474 to 489 (RGAA…VRRL). Mg(2+) is bound at residue aspartate 755. Residue lysine 890 coordinates RNA. Residues lysine 1020 and arginine 1036 each coordinate DNA. Position 1051 is a phosphoserine (serine 1051). Zn(2+)-binding residues include cysteine 1070, cysteine 1073, cysteine 1098, and cysteine 1101. The C4-type zinc-finger motif lies at 1070 to 1101 (CVECGSLLSPLLEKPPPSWSAMRNRKYNCTVC).

Belongs to the RNA polymerase beta chain family. As to quaternary structure, component of the RNA polymerase I (Pol I) complex consisting of 13 subunits: a ten-subunit catalytic core composed of POLR1A/RPA1, POLR1B/RPA2, POLR1C/RPAC1, POLR1D/RPAC2, POLR1H/RPA12, POLR2E/RPABC1, POLR2F/RPABC2, POLR2H/RPABC3, POLR2K/RPABC4 and POLR2L/RPABC5; a mobile stalk subunit POLR1F/RPA43 protruding from the core and additional subunits homologous to general transcription factors POLR1E/RPA49 and POLR1G/RPA34. Part of Pol I pre-initiation complex (PIC), in which Pol I core assembles with RRN3 and promoter-bound UTBF and SL1/TIF-IB complex. The cofactor is Mg(2+).

Its subcellular location is the nucleus. The protein resides in the nucleolus. The protein localises to the chromosome. The catalysed reaction is RNA(n) + a ribonucleoside 5'-triphosphate = RNA(n+1) + diphosphate. Functionally, catalytic core component of RNA polymerase I (Pol I), a DNA-dependent RNA polymerase which synthesizes ribosomal RNA precursors using the four ribonucleoside triphosphates as substrates. Transcribes 47S pre-rRNAs from multicopy rRNA gene clusters, giving rise to 5.8S, 18S and 28S ribosomal RNAs. Pol I-mediated transcription cycle proceeds through transcription initiation, transcription elongation and transcription termination stages. During transcription initiation, Pol I pre-initiation complex (PIC) is recruited by the selectivity factor 1 (SL1/TIF-IB) complex bound to the core promoter that precedes an rDNA repeat unit. The PIC assembly bends the promoter favoring the formation of the transcription bubble and promoter escape. Once the polymerase has escaped from the promoter it enters the elongation phase during which RNA is actively polymerized, based on complementarity with the template DNA strand. Highly processive, assembles in structures referred to as 'Miller trees' where many elongating Pol I complexes queue and transcribe the same rDNA coding regions. At terminator sequences downstream of the rDNA gene, PTRF interacts with Pol I and halts Pol I transcription leading to the release of the RNA transcript and polymerase from the DNA. Forms Pol I active center together with the largest subunit POLR1A/RPA1. Appends one nucleotide at a time to the 3' end of the nascent RNA, with POLR1A/RPA1 contributing a Mg(2+)-coordinating DxDGD motif, and POLR1B/RPA2 participating in the coordination of a second Mg(2+) ion and providing lysine residues believed to facilitate Watson-Crick base pairing between the incoming nucleotide and the template base. Typically, Mg(2+) ions direct a 5' nucleoside triphosphate to form a phosphodiester bond with the 3' hydroxyl of the preceding nucleotide of the nascent RNA, with the elimination of pyrophosphate. Has proofreading activity: Pauses and backtracks to allow the cleavage of a missincorporated nucleotide via POLR1H/RPA12. High Pol I processivity is associated with decreased transcription fidelity. This chain is DNA-directed RNA polymerase I subunit RPA2, found in Mus musculus (Mouse).